Here is a 514-residue protein sequence, read N- to C-terminus: Cardiolipin synthase 2 (514 aa).

The next 3 membrane-spanning stretches (helical) occupy residues 7–27 (LIFF…FIDV), 41–61 (ILGI…CVIF), and 71–91 (LTWL…YLLF). PLD phosphodiesterase domains are found at residues 249–276 (INYR…GDEY) and 427–454 (EKGF…DMRS). Residues His254, Lys256, Asp261, His432, Lys434, and Asp439 contribute to the active site.

The protein belongs to the phospholipase D family. Cardiolipin synthase subfamily.

It is found in the cell membrane. The catalysed reaction is 2 a 1,2-diacyl-sn-glycero-3-phospho-(1'-sn-glycerol) = a cardiolipin + glycerol. In terms of biological role, catalyzes the reversible phosphatidyl group transfer from one phosphatidylglycerol molecule to another to form cardiolipin (CL) (diphosphatidylglycerol) and glycerol. The chain is Cardiolipin synthase 2 (cls2) from Bacillus cereus (strain ATCC 14579 / DSM 31 / CCUG 7414 / JCM 2152 / NBRC 15305 / NCIMB 9373 / NCTC 2599 / NRRL B-3711).